The chain runs to 507 residues: Mandelamide hydrolase (507 aa).

Catalysis depends on charge relay system residues Lys-100 and Ser-180. The active-site Acyl-ester intermediate is the Ser-204.

In terms of assembly, monomer.

It catalyses the reaction (R)-mandelamide + H2O = (R)-mandelate + NH4(+). Its activity is regulated as follows. Inhibited by 3,4-dichloroisocoumarin and PMSF. Functionally, hydrolyzes both the R- and the S-enantiomers of mandelamide, and phenylacetamide. Has lower activity on 3-phenylpropionaide and lactamide. Does not hydrolyze benzamide. Hydrolyzes esters and amides with little steric bulk. Preferentially hydrolyzes aromatic substrates. The polypeptide is Mandelamide hydrolase (Pseudomonas putida (Arthrobacter siderocapsulatus)).